The following is a 295-amino-acid chain: MTKQIQKTVSVCIIGRPNSGKSTLLNRIIGEKLSIVTPKVQTTRSIITGIITLKDTQVILYDTPGIFEPKGTLEKAMVRCAWSSLHSADLVMLIIDSLKPFDDVTHNILDKLCSLNIVPVFLLNKIEIESKYLNNLKAFLTENHPDSLLFPISALSGKNIDRLLEYITSKAKIAPWLYAEDDITDLPMRFIAAEITREQLFLNLQQELPYKLTVQTEKWEELKDKSVKINQVIVVARESYKTIILGKNGSKIKEIGAKSRMQMEQFFSCPIHLFLFVKVRELWENNQEFYQYMKI.

Positions 7–176 (KTVSVCIIGR…ITSKAKIAPW (170 aa)) constitute an Era-type G domain. The interval 15-22 (GRPNSGKS) is G1. 15-22 (GRPNSGKS) is a GTP binding site. The G2 stretch occupies residues 41-45 (QTTRS). Residues 62-65 (DTPG) are G3. GTP-binding positions include 62–66 (DTPGI) and 124–127 (NKIE). The G4 stretch occupies residues 124–127 (NKIE). The tract at residues 152 to 154 (ISA) is G5. The region spanning 204–281 (LQQELPYKLT…HLFLFVKVRE (78 aa)) is the KH type-2 domain.

The protein belongs to the TRAFAC class TrmE-Era-EngA-EngB-Septin-like GTPase superfamily. Era GTPase family. Monomer.

Its subcellular location is the cytoplasm. It localises to the cell inner membrane. In terms of biological role, an essential GTPase that binds both GDP and GTP, with rapid nucleotide exchange. Plays a role in 16S rRNA processing and 30S ribosomal subunit biogenesis and possibly also in cell cycle regulation and energy metabolism. This Rickettsia canadensis (strain McKiel) protein is GTPase Era.